The primary structure comprises 218 residues: Adenylate kinase (218 aa).

Position 10 to 15 (10 to 15) interacts with ATP; sequence GAGKGT. The tract at residues 30–59 is NMP; that stretch reads STGDMLRAAVKAGSEMGLKAKAVMDAGQLV. Residues Thr31, Arg36, 57–59, 85–88, and Gln92 contribute to the AMP site; these read QLV and GFPR. The LID stretch occupies residues 122–159; sequence GRRVHEASGRTYHLVYNPPKVEGKDDVTGEDLVQRADD. Residues Arg123 and 132–133 contribute to the ATP site; that span reads TY. AMP is bound by residues Arg156 and Arg167. ATP is bound at residue Gly203.

The protein belongs to the adenylate kinase family. Monomer.

The protein resides in the cytoplasm. The enzyme catalyses AMP + ATP = 2 ADP. Its pathway is purine metabolism; AMP biosynthesis via salvage pathway; AMP from ADP: step 1/1. Functionally, catalyzes the reversible transfer of the terminal phosphate group between ATP and AMP. Plays an important role in cellular energy homeostasis and in adenine nucleotide metabolism. The polypeptide is Adenylate kinase (Marinomonas sp. (strain MWYL1)).